A 246-amino-acid polypeptide reads, in one-letter code: 1-(5-phosphoribosyl)-5-[(5-phosphoribosylamino)methylideneamino] imidazole-4-carboxamide isomerase (246 aa).

The active-site Proton acceptor is the D8. D131 acts as the Proton donor in catalysis.

It belongs to the HisA/HisF family.

It localises to the cytoplasm. It carries out the reaction 1-(5-phospho-beta-D-ribosyl)-5-[(5-phospho-beta-D-ribosylamino)methylideneamino]imidazole-4-carboxamide = 5-[(5-phospho-1-deoxy-D-ribulos-1-ylimino)methylamino]-1-(5-phospho-beta-D-ribosyl)imidazole-4-carboxamide. The protein operates within amino-acid biosynthesis; L-histidine biosynthesis; L-histidine from 5-phospho-alpha-D-ribose 1-diphosphate: step 4/9. The sequence is that of 1-(5-phosphoribosyl)-5-[(5-phosphoribosylamino)methylideneamino] imidazole-4-carboxamide isomerase from Lactococcus lactis subsp. cremoris (strain MG1363).